Consider the following 403-residue polypeptide: tRNA(Met) cytidine acetate ligase (403 aa).

Residues 7-20 (VVEY…HAYH), glycine 101, asparagine 164, and 189-190 (RI) contribute to the ATP site.

It belongs to the TmcAL family.

It localises to the cytoplasm. It carries out the reaction cytidine(34) in elongator tRNA(Met) + acetate + ATP = N(4)-acetylcytidine(34) in elongator tRNA(Met) + AMP + diphosphate. In terms of biological role, catalyzes the formation of N(4)-acetylcytidine (ac(4)C) at the wobble position of elongator tRNA(Met), using acetate and ATP as substrates. First activates an acetate ion to form acetyladenylate (Ac-AMP) and then transfers the acetyl group to tRNA to form ac(4)C34. In Lysinibacillus sphaericus (strain C3-41), this protein is tRNA(Met) cytidine acetate ligase.